The primary structure comprises 486 residues: MTDEKLNDHTVKAPEYLPDILTVESLDMEAQGIAHRADGKVVFIEGALPFERVTANVYRKKSSFEKAVVMAIHRESSQRVRPACPHFGLHTGACGGCKMQHLHVGAQVAVKQRVLEDNLWHIGKVKADNLLRPIEGPAWGYRYRARLSVRYVRKKNAVLVGFHERKSSYVADMTECHVVPRHVSDMLVPLRELIAGMDARETLPQIELACGDTVTAMVLRHMEPLSSGDLARLRAFAVSHPGLQWWLQPGGLDSVKLLDEGVPELSYDLPEFGITMPFKPTDFTQVNPHINQVLVSRALRLLAVQPHERVIDWFCGLGNFTLPLATCAREVLGIEGSEALVARSCQNFKKNQPASQSRSALSATEFVARNLFEMTPAMLVKDGMADKWLVDPPREGAFELFKSLAALHQQMVTGVPCDDGEQQQSLVLGDWTPPQRIVYVSCNPATLARDAGVLVESGAYRCTLAGVVNMFPHTAHVESIAVFERG.

A TRAM domain is found at 10-71 (TVKAPEYLPD…SSFEKAVVMA (62 aa)). [4Fe-4S] cluster is bound by residues cysteine 84, cysteine 94, cysteine 97, and cysteine 176. Glutamine 285, phenylalanine 314, asparagine 319, glutamate 335, asparagine 370, and aspartate 391 together coordinate S-adenosyl-L-methionine. The active-site Nucleophile is the cysteine 442.

The protein belongs to the class I-like SAM-binding methyltransferase superfamily. RNA M5U methyltransferase family. RlmD subfamily.

The catalysed reaction is uridine(1939) in 23S rRNA + S-adenosyl-L-methionine = 5-methyluridine(1939) in 23S rRNA + S-adenosyl-L-homocysteine + H(+). Catalyzes the formation of 5-methyl-uridine at position 1939 (m5U1939) in 23S rRNA. The polypeptide is 23S rRNA (uracil(1939)-C(5))-methyltransferase RlmD (Polaromonas sp. (strain JS666 / ATCC BAA-500)).